The sequence spans 848 residues: Aryl hydrocarbon receptor (848 aa).

Residue M1 is modified to N-acetylmethionine. The propeptide occupies M1 to Y10. Polar residues predominate over residues M1–Y10. The interval M1–H39 is disordered. Short sequence motifs (nuclear localization signal) lie at residues R13 to R16 and K37 to R42. One can recognise a bHLH domain in the interval P27 to K80. The interval R38–K66 is DNA-binding. Required for maintaining the overall integrity of the AHR:ARNT heterodimer and its transcriptional activity stretches follow at residues L50–F82, L118–V126, and F266–I268. Residues L64–L72 carry the Nuclear export signal motif. One can recognise a PAS 1 domain in the interval N111–S181. The PAS 2 domain maps to P275 to K342. A PAC domain is found at M348–L386. Positions T824–L848 are disordered.

Homodimer. Heterodimer; efficient DNA binding requires dimerization with another bHLH protein. Interacts with ARNT; the heterodimer ARNT:AHR binds to core DNA sequence 5'-TGCGTG-3' within the dioxin response element (DRE) of target gene promoters and activates their transcription. Binds MYBBP1A. Interacts with coactivators including SRC-1, RIP140 and NOCA7, and with the corepressor SMRT. Interacts with NEDD8 and IVNS1ABP. Interacts with BMAL1. Interacts with HSP90AB1. Interacts with TIPARP; leading to mono-ADP-ribosylation of AHR and subsequent inhibition of AHR. Post-translationally, mono-ADP-ribosylated, leading to inhibit transcription activator activity of AHR. Expressed in all tissues tested including blood, brain, heart, kidney, liver, lung, pancreas and skeletal muscle. Expressed in retinal photoreceptors.

Its subcellular location is the cytoplasm. It is found in the nucleus. Ligand-activated transcription factor that enables cells to adapt to changing conditions by sensing compounds from the environment, diet, microbiome and cellular metabolism, and which plays important roles in development, immunity and cancer. Upon ligand binding, translocates into the nucleus, where it heterodimerizes with ARNT and induces transcription by binding to xenobiotic response elements (XRE). Regulates a variety of biological processes, including angiogenesis, hematopoiesis, drug and lipid metabolism, cell motility and immune modulation. Xenobiotics can act as ligands: upon xenobiotic-binding, activates the expression of multiple phase I and II xenobiotic chemical metabolizing enzyme genes (such as the CYP1A1 gene). Mediates biochemical and toxic effects of halogenated aromatic hydrocarbons. Next to xenobiotics, natural ligands derived from plants, microbiota, and endogenous metabolism are potent AHR agonists. Tryptophan (Trp) derivatives constitute an important class of endogenous AHR ligands. Acts as a negative regulator of anti-tumor immunity: indoles and kynurenic acid generated by Trp catabolism act as ligand and activate AHR, thereby promoting AHR-driven cancer cell motility and suppressing adaptive immunity. Regulates the circadian clock by inhibiting the basal and circadian expression of the core circadian component PER1. Inhibits PER1 by repressing the CLOCK-BMAL1 heterodimer mediated transcriptional activation of PER1. The heterodimer ARNT:AHR binds to core DNA sequence 5'-TGCGTG-3' within the dioxin response element (DRE) of target gene promoters and activates their transcription. The sequence is that of Aryl hydrocarbon receptor from Homo sapiens (Human).